The following is a 92-amino-acid chain: Small ribosomal subunit protein uS19c (92 aa).

The protein belongs to the universal ribosomal protein uS19 family.

It localises to the plastid. The protein localises to the chloroplast. Protein S19 forms a complex with S13 that binds strongly to the 16S ribosomal RNA. The protein is Small ribosomal subunit protein uS19c of Panax ginseng (Korean ginseng).